A 300-amino-acid polypeptide reads, in one-letter code: tRNA-cytidine(32) 2-sulfurtransferase (300 aa).

Residues 57–62 (SGGKDS) carry the PP-loop motif motif. [4Fe-4S] cluster contacts are provided by Cys-132, Cys-135, and Cys-223.

This sequence belongs to the TtcA family. As to quaternary structure, homodimer. Mg(2+) is required as a cofactor. Requires [4Fe-4S] cluster as cofactor.

It is found in the cytoplasm. It catalyses the reaction cytidine(32) in tRNA + S-sulfanyl-L-cysteinyl-[cysteine desulfurase] + AH2 + ATP = 2-thiocytidine(32) in tRNA + L-cysteinyl-[cysteine desulfurase] + A + AMP + diphosphate + H(+). The protein operates within tRNA modification. In terms of biological role, catalyzes the ATP-dependent 2-thiolation of cytidine in position 32 of tRNA, to form 2-thiocytidine (s(2)C32). The sulfur atoms are provided by the cysteine/cysteine desulfurase (IscS) system. The sequence is that of tRNA-cytidine(32) 2-sulfurtransferase from Xanthomonas campestris pv. campestris (strain B100).